An 83-amino-acid polypeptide reads, in one-letter code: Putative beta-neurotoxin RjAa10f (83 aa).

The first 18 residues, 1-18 (MKILIFIIASFMLIGVWC), serve as a signal peptide directing secretion. In terms of domain architecture, LCN-type CS-alpha/beta spans 19-82 (KEGYPMGRDG…VWDPNNNKCV (64 aa)). 4 disulfides stabilise this stretch: Cys-29/Cys-81, Cys-33/Cys-55, Cys-40/Cys-62, and Cys-44/Cys-64.

This sequence belongs to the long (4 C-C) scorpion toxin superfamily. Sodium channel inhibitor family. Beta subfamily. In terms of tissue distribution, expressed by the venom gland.

The protein localises to the secreted. Functionally, beta toxins bind voltage-independently at site-4 of sodium channels (Nav) and shift the voltage of activation toward more negative potentials thereby affecting sodium channel activation and promoting spontaneous and repetitive firing. This is Putative beta-neurotoxin RjAa10f from Rhopalurus junceus (Caribbean blue scorpion).